Consider the following 280-residue polypeptide: Pantothenate synthetase (280 aa).

Position 30–37 (30–37 (MGYLHEGH)) interacts with ATP. His37 functions as the Proton donor in the catalytic mechanism. Gln61 contributes to the (R)-pantoate binding site. Gln61 is a beta-alanine binding site. 147–150 (GQKD) provides a ligand contact to ATP. Residue Gln153 participates in (R)-pantoate binding. Residues Val176 and 184–187 (MSSR) each bind ATP.

Belongs to the pantothenate synthetase family. In terms of assembly, homodimer.

It localises to the cytoplasm. The catalysed reaction is (R)-pantoate + beta-alanine + ATP = (R)-pantothenate + AMP + diphosphate + H(+). The protein operates within cofactor biosynthesis; (R)-pantothenate biosynthesis; (R)-pantothenate from (R)-pantoate and beta-alanine: step 1/1. In terms of biological role, catalyzes the condensation of pantoate with beta-alanine in an ATP-dependent reaction via a pantoyl-adenylate intermediate. The protein is Pantothenate synthetase of Thermotoga neapolitana.